Consider the following 303-residue polypeptide: Glutaminase (303 aa).

Residues S63, N113, E157, N164, Y188, Y239, and V257 each contribute to the substrate site.

The protein belongs to the glutaminase family. As to quaternary structure, homotetramer.

It catalyses the reaction L-glutamine + H2O = L-glutamate + NH4(+). The chain is Glutaminase from Saccharopolyspora erythraea (strain ATCC 11635 / DSM 40517 / JCM 4748 / NBRC 13426 / NCIMB 8594 / NRRL 2338).